The following is a 349-amino-acid chain: 4-hydroxy-3-methylbut-2-en-1-yl diphosphate synthase (flavodoxin) (349 aa).

[4Fe-4S] cluster contacts are provided by Cys-265, Cys-268, Cys-300, and Glu-307.

This sequence belongs to the IspG family. Requires [4Fe-4S] cluster as cofactor.

The catalysed reaction is (2E)-4-hydroxy-3-methylbut-2-enyl diphosphate + oxidized [flavodoxin] + H2O + 2 H(+) = 2-C-methyl-D-erythritol 2,4-cyclic diphosphate + reduced [flavodoxin]. Its pathway is isoprenoid biosynthesis; isopentenyl diphosphate biosynthesis via DXP pathway; isopentenyl diphosphate from 1-deoxy-D-xylulose 5-phosphate: step 5/6. Functionally, converts 2C-methyl-D-erythritol 2,4-cyclodiphosphate (ME-2,4cPP) into 1-hydroxy-2-methyl-2-(E)-butenyl 4-diphosphate. This is 4-hydroxy-3-methylbut-2-en-1-yl diphosphate synthase (flavodoxin) from Thermodesulfovibrio yellowstonii (strain ATCC 51303 / DSM 11347 / YP87).